We begin with the raw amino-acid sequence, 266 residues long: Glucosamine-6-phosphate deaminase (266 aa).

D72 functions as the Proton acceptor; for enolization step in the catalytic mechanism. Catalysis depends on D141, which acts as the For ring-opening step. H143 (proton acceptor; for ring-opening step) is an active-site residue. The active-site For ring-opening step is the E148.

Belongs to the glucosamine/galactosamine-6-phosphate isomerase family. NagB subfamily. Homohexamer.

The enzyme catalyses alpha-D-glucosamine 6-phosphate + H2O = beta-D-fructose 6-phosphate + NH4(+). It participates in amino-sugar metabolism; N-acetylneuraminate degradation; D-fructose 6-phosphate from N-acetylneuraminate: step 5/5. Its activity is regulated as follows. Allosterically activated by N-acetylglucosamine 6-phosphate (GlcNAc6P). Functionally, catalyzes the reversible isomerization-deamination of glucosamine 6-phosphate (GlcN6P) to form fructose 6-phosphate (Fru6P) and ammonium ion. The chain is Glucosamine-6-phosphate deaminase from Vibrio campbellii (strain ATCC BAA-1116).